A 184-amino-acid polypeptide reads, in one-letter code: Transcription termination/antitermination protein NusG (184 aa).

The KOW domain occupies 133–163 (EGDQVRVVSGPFADFTGTVTEINPERGKVKV).

It belongs to the NusG family.

In terms of biological role, participates in transcription elongation, termination and antitermination. The polypeptide is Transcription termination/antitermination protein NusG (Thermus thermophilus (strain ATCC 27634 / DSM 579 / HB8)).